A 283-amino-acid polypeptide reads, in one-letter code: Protein/nucleic acid deglycase HchA (283 aa).

Zn(2+) is bound by residues His86, Glu91, and His123. Cys185 acts as the Nucleophile in catalysis.

The protein belongs to the peptidase C56 family. HchA subfamily. In terms of assembly, homodimer.

The protein resides in the cytoplasm. It catalyses the reaction N(omega)-(1-hydroxy-2-oxopropyl)-L-arginyl-[protein] + H2O = lactate + L-arginyl-[protein] + H(+). It carries out the reaction N(6)-(1-hydroxy-2-oxopropyl)-L-lysyl-[protein] + H2O = lactate + L-lysyl-[protein] + H(+). The enzyme catalyses S-(1-hydroxy-2-oxopropyl)-L-cysteinyl-[protein] + H2O = lactate + L-cysteinyl-[protein] + H(+). The catalysed reaction is N(omega)-(1-hydroxy-2-oxoethyl)-L-arginyl-[protein] + H2O = L-arginyl-[protein] + glycolate + H(+). It catalyses the reaction N(6)-(1-hydroxy-2-oxoethyl)-L-lysyl-[protein] + H2O = glycolate + L-lysyl-[protein] + H(+). It carries out the reaction S-(1-hydroxy-2-oxoethyl)-L-cysteinyl-[protein] + H2O = glycolate + L-cysteinyl-[protein] + H(+). The enzyme catalyses N(2)-(1-hydroxy-2-oxopropyl)-dGTP + H2O = lactate + dGTP + H(+). The catalysed reaction is N(2)-(1-hydroxy-2-oxopropyl)-GTP + H2O = lactate + GTP + H(+). It catalyses the reaction N(2)-(1-hydroxy-2-oxopropyl)-GDP + H2O = lactate + GDP + H(+). It carries out the reaction N(2)-(1-hydroxy-2-oxopropyl)-GMP + H2O = lactate + GMP + H(+). The enzyme catalyses N(2)-(1-hydroxy-2-oxoethyl)-dGTP + H2O = dGTP + glycolate + H(+). The catalysed reaction is N(2)-(1-hydroxy-2-oxoethyl)-GTP + H2O = glycolate + GTP + H(+). It catalyses the reaction N(2)-(1-hydroxy-2-oxoethyl)-GDP + H2O = glycolate + GDP + H(+). It carries out the reaction N(2)-(1-hydroxy-2-oxoethyl)-GMP + H2O = glycolate + GMP + H(+). The enzyme catalyses an N(2)-(1-hydroxy-2-oxopropyl)-guanosine in RNA + H2O = a guanosine in RNA + lactate + H(+). The catalysed reaction is an N(2)-(1-hydroxy-2-oxopropyl)-2'-deoxyguanosine in DNA + H2O = a 2'-deoxyguanosine in DNA + lactate + H(+). It catalyses the reaction an N(2)-(1-hydroxy-2-oxoethyl)-guanosine in RNA + H2O = a guanosine in RNA + glycolate + H(+). It carries out the reaction an N(2)-(1-hydroxy-2-oxoethyl)-2'-deoxyguanosine in DNA + H2O = a 2'-deoxyguanosine in DNA + glycolate + H(+). Its function is as follows. Protein and nucleotide deglycase that catalyzes the deglycation of the Maillard adducts formed between amino groups of proteins or nucleotides and reactive carbonyl groups of glyoxals. Thus, functions as a protein deglycase that repairs methylglyoxal- and glyoxal-glycated proteins, and releases repaired proteins and lactate or glycolate, respectively. Deglycates cysteine, arginine and lysine residues in proteins, and thus reactivates these proteins by reversing glycation by glyoxals. Acts on early glycation intermediates (hemithioacetals and aminocarbinols), preventing the formation of Schiff bases and advanced glycation endproducts (AGE). Also functions as a nucleotide deglycase able to repair glycated guanine in the free nucleotide pool (GTP, GDP, GMP, dGTP) and in DNA and RNA. Is thus involved in a major nucleotide repair system named guanine glycation repair (GG repair), dedicated to reversing methylglyoxal and glyoxal damage via nucleotide sanitization and direct nucleic acid repair. Plays an important role in protecting cells from carbonyl stress. The chain is Protein/nucleic acid deglycase HchA from Shigella flexneri.